The primary structure comprises 1427 residues: DNA-directed RNA polymerase subunit beta' (1427 aa).

Zn(2+) contacts are provided by cysteine 66, cysteine 68, cysteine 81, and cysteine 84. Residues aspartate 472, aspartate 474, and aspartate 476 each coordinate Mg(2+). Positions 815, 889, 896, and 899 each coordinate Zn(2+).

The protein belongs to the RNA polymerase beta' chain family. As to quaternary structure, the RNAP catalytic core consists of 2 alpha, 1 beta, 1 beta' and 1 omega subunit. When a sigma factor is associated with the core the holoenzyme is formed, which can initiate transcription. Requires Mg(2+) as cofactor. It depends on Zn(2+) as a cofactor.

The catalysed reaction is RNA(n) + a ribonucleoside 5'-triphosphate = RNA(n+1) + diphosphate. Its function is as follows. DNA-dependent RNA polymerase catalyzes the transcription of DNA into RNA using the four ribonucleoside triphosphates as substrates. This chain is DNA-directed RNA polymerase subunit beta', found in Bacteroides fragilis (strain ATCC 25285 / DSM 2151 / CCUG 4856 / JCM 11019 / LMG 10263 / NCTC 9343 / Onslow / VPI 2553 / EN-2).